A 180-amino-acid polypeptide reads, in one-letter code: Large ribosomal subunit protein uL10 (180 aa).

Belongs to the universal ribosomal protein uL10 family. Part of the ribosomal stalk of the 50S ribosomal subunit. The N-terminus interacts with L11 and the large rRNA to form the base of the stalk. The C-terminus forms an elongated spine to which L12 dimers bind in a sequential fashion forming a multimeric L10(L12)X complex.

Forms part of the ribosomal stalk, playing a central role in the interaction of the ribosome with GTP-bound translation factors. The sequence is that of Large ribosomal subunit protein uL10 (rplJ) from Treponema pallidum (strain Nichols).